Reading from the N-terminus, the 626-residue chain is Mitogen-activated protein kinase kinase kinase 3 (626 aa).

One can recognise a PB1 domain in the interval 44–123 (DVRIKFEHNG…KSLRILLLSQ (80 aa)). Composition is skewed to polar residues over residues 146–155 (QSAGDINTIY), 165–174 (LSVSSQNPGR), and 219–232 (SAEN…QSLD). Disordered stretches follow at residues 146–184 (QSAG…YVPE) and 218–262 (SSAE…SDRE). The residue at position 147 (Ser-147) is a Phosphoserine. A Phosphoserine; by SGK1 modification is found at Ser-166. Residues Ser-250 and Ser-312 each carry the phosphoserine modification. Phosphoserine; by SGK1 is present on Ser-337. Position 340 is a phosphoserine (Ser-340). The Protein kinase domain occupies 362–622 (WRRGKLLGQG…AEELLTHHFA (261 aa)). ATP is bound by residues 368–376 (LGQGAFGRV) and Lys-391. Asp-489 serves as the catalytic Proton acceptor.

Belongs to the protein kinase superfamily. STE Ser/Thr protein kinase family. MAP kinase kinase kinase subfamily. In terms of assembly, binds both upstream activators and downstream substrates in multimolecular complexes. Part of a complex with MAP2K3, RAC1 and CCM2. Interacts with MAP2K5 and SPAG9. Mg(2+) is required as a cofactor. Phosphorylation at Ser-166 and Ser-337 by SGK1 inhibits its activity.

The enzyme catalyses L-seryl-[protein] + ATP = O-phospho-L-seryl-[protein] + ADP + H(+). The catalysed reaction is L-threonyl-[protein] + ATP = O-phospho-L-threonyl-[protein] + ADP + H(+). Its activity is regulated as follows. Activated by phosphorylation on Thr-530. Its function is as follows. Component of a protein kinase signal transduction cascade. Mediates activation of the NF-kappa-B, AP1 and DDIT3 transcriptional regulators. The sequence is that of Mitogen-activated protein kinase kinase kinase 3 (MAP3K3) from Homo sapiens (Human).